A 326-amino-acid polypeptide reads, in one-letter code: Flap endonuclease 1 (326 aa).

Residues 1–100 (MGNADLRSLA…DEVEKRREQR (100 aa)) form an N-domain region. D28, D82, E154, E156, D175, D177, and D225 together coordinate Mg(2+). Positions 118–246 (RVAKLDSRTQ…TAVKDLHEHG (129 aa)) are I-domain. Residues 318 to 326 (VQTGLDRWA) are interaction with PCNA.

Belongs to the XPG/RAD2 endonuclease family. FEN1 subfamily. In terms of assembly, interacts with PCNA. PCNA stimulates the nuclease activity without altering cleavage specificity. The cofactor is Mg(2+).

Its function is as follows. Structure-specific nuclease with 5'-flap endonuclease and 5'-3' exonuclease activities involved in DNA replication and repair. During DNA replication, cleaves the 5'-overhanging flap structure that is generated by displacement synthesis when DNA polymerase encounters the 5'-end of a downstream Okazaki fragment. Binds the unpaired 3'-DNA end and kinks the DNA to facilitate 5' cleavage specificity. Cleaves one nucleotide into the double-stranded DNA from the junction in flap DNA, leaving a nick for ligation. Also involved in the base excision repair (BER) pathway. Acts as a genome stabilization factor that prevents flaps from equilibrating into structures that lead to duplications and deletions. Also possesses 5'-3' exonuclease activity on nicked or gapped double-stranded DNA. This is Flap endonuclease 1 from Haloarcula marismortui (strain ATCC 43049 / DSM 3752 / JCM 8966 / VKM B-1809) (Halobacterium marismortui).